Reading from the N-terminus, the 450-residue chain is NADP-specific glutamate dehydrogenase (450 aa).

The active site involves K111.

The protein belongs to the Glu/Leu/Phe/Val dehydrogenases family. In terms of assembly, homohexamer.

It carries out the reaction L-glutamate + NADP(+) + H2O = 2-oxoglutarate + NH4(+) + NADPH + H(+). The protein is NADP-specific glutamate dehydrogenase of Hebeloma cylindrosporum.